Here is a 97-residue protein sequence, read N- to C-terminus: Large ribosomal subunit protein eL21 (97 aa).

Positions 1–24 (MVQKPHSFRRKTRKKLRKHPRRRG) are enriched in basic residues. The disordered stretch occupies residues 1-25 (MVQKPHSFRRKTRKKLRKHPRRRGL).

Belongs to the eukaryotic ribosomal protein eL21 family.

The polypeptide is Large ribosomal subunit protein eL21 (rpl21e) (Pyrococcus horikoshii (strain ATCC 700860 / DSM 12428 / JCM 9974 / NBRC 100139 / OT-3)).